A 551-amino-acid polypeptide reads, in one-letter code: ETS domain-containing transcription factor ERF (551 aa).

Phosphothreonine occurs at positions 3 and 7. 2 positions are modified to phosphoserine: serine 20 and serine 24. The segment at residues 27-107 (IQLWHFILEL…KGKRFTYKFN (81 aa)) is a DNA-binding region (ETS). Disordered stretches follow at residues 130-169 (QSAP…SSSS) and 184-304 (GSVS…SHFS). Serine 185 and serine 190 each carry phosphoserine. Residues 239 to 250 (RGGPEPLSPFPV) show a composition bias toward pro residues. Residues 251–268 (SPLAGPGSLLPPQLSPAL) show a composition bias toward low complexity. A compositionally biased stretch (gly residues) spans 289–301 (SGGGGPSGSGGGS). Serine 327 is subject to Phosphoserine. Positions 342–476 (PQRPDKCPLP…KPEPGEAPGV (135 aa)) are disordered. Residues 348-361 (CPLPPMAPETPPVP) show a composition bias toward pro residues. The segment covering 362 to 373 (SSASSSSSSSSS) has biased composition (low complexity). Over residues 404-413 (GGSGSGGLAE) the composition is skewed to gly residues. Phosphoserine occurs at positions 433 and 437. Over residues 433–453 (SEGESEEVEVTDISDEDEEDG) the composition is skewed to acidic residues. Threonine 443 is modified (phosphothreonine). At serine 446 the chain carries Phosphoserine. Glycyl lysine isopeptide (Lys-Gly) (interchain with G-Cter in SUMO2) cross-links involve residues lysine 467, lysine 483, and lysine 514. The disordered stretch occupies residues 495–551 (RLEGGGCLSGGPEDEGEDKKVRGDVGPGESGGPLTPRRVSSDLQHATAQLSLEHRDS). Threonine 529 is subject to Phosphothreonine; by MAPK1. Phosphoserine occurs at positions 534, 535, and 551. Positions 535–544 (SDLQHATAQL) are enriched in polar residues.

Belongs to the ETS family. Phosphorylated by multiple kinases including MAPK1/ERK2 at THR-529. Phosphorylation regulates the activity of ERF. As to expression, expressed along the osteogenic margins of the developing calvarial bones, in a similar distribution to that observed for the master osteogenic regulator RUNX2.

Its subcellular location is the nucleus. Its function is as follows. Potent transcriptional repressor that binds to the H1 element of the Ets2 promoter. May regulate other genes involved in cellular proliferation. Required for extraembryonic ectoderm differentiation, ectoplacental cone cavity closure, and chorioallantoic attachment. May be important for regulating trophoblast stem cell differentiation. In Mus musculus (Mouse), this protein is ETS domain-containing transcription factor ERF (Erf).